The primary structure comprises 521 residues: Amidase 1 (521 aa).

Active-site charge relay system residues include K112 and S187. Substrate is bound by residues S187 and 208–211 (IGGS). Catalysis depends on S211, which acts as the Acyl-ester intermediate.

Belongs to the amidase family.

The catalysed reaction is a monocarboxylic acid amide + H2O = a monocarboxylate + NH4(+). The protein operates within xenobiotic degradation. Amidase; part of the Fusarium detoxification of benzoxazolinone cluster 1 (FDB1) involved in the degradation of benzoxazolinones produced by the host plant. Maize, wheat, and rye produce the 2 benzoxazinone phytoanticipins 2,4-dihy-droxy-7-methoxy-1,4-benzoxazin-3-one (DIMBOA) and 2,4-dihydroxy-1,4-benzoxazin-3-one (DIBOA) that, due to their inherent instability once released, spontaneously degrade to the more stable corresponding benzoxazolinones, 6-methoxy-2-benzoxazolinone (MBOA) and 2-benzoxazolinone (BOA), respectively. The first step in the detoxification of benzoxazolinones involves the hydrolysis of the cyclic ester bond of benzoxazolinones by the FDB1 cluster gamma-lactamase MBL1 to aminophenols. MBL1 is able to convert BOA into 2-aminophenol (2-AP), as well as MBOA into 5-methoxy-2-aminophenol (2-AMP). The FDB2 cluster N-malonyltransferase FDB2/NAT1 then metabolizes aminophenols via N-malonylation to non-toxic malonamic acids. FDB2/NAT1 converts 2-AP into N-(2-hydroxyphenyl) malonamic acid (HPMA) and 2-AMP into N-(2-hydroxy-4-methoxyphenyl) malonamic acid (HMPMA). The duplicated dienlactone hydrolases DLH1 and DLH2 may provide redundant function for hydrolyzing the lactone moiety in the BOA molecule. The roles of the amidases an other enzymes encoded by the 2 FDB clusters have not been identified so far. This is Amidase 1 from Gibberella moniliformis (strain M3125 / FGSC 7600) (Maize ear and stalk rot fungus).